Reading from the N-terminus, the 527-residue chain is Protein SDS24 (527 aa).

Composition is skewed to low complexity over residues 1–22 (MAST…LPTS) and 55–74 (TPPT…TPAP). The disordered stretch occupies residues 1–75 (MASTSNTFPP…PGCAATPAPL (75 aa)). Residue serine 94 is modified to Phosphoserine. CBS domains lie at 114–175 (IEQN…KITV), 198–256 (LTPK…NARS), 283–342 (TSRQ…QYPL), and 443–512 (LNSH…GNKE). Residues 424-447 (AQSSANGATPMSKSSSSTSLNSHS) are compositionally biased toward low complexity. 2 disordered regions span residues 424–478 (AQSS…TNTP) and 508–527 (TGNK…SIAM). Serine 458 and serine 524 each carry phosphoserine.

The protein belongs to the SDS23 family.

It localises to the cytoplasm. The protein localises to the nucleus. In terms of biological role, involved in DNA replication and cell separation during budding. This is Protein SDS24 (SDS24) from Saccharomyces cerevisiae (strain YJM789) (Baker's yeast).